Consider the following 206-residue polypeptide: MLVVLLTAALLVLSSAHGSDEEVIYEDSSSQLLDVEQQNQKHGQHHQKPPPASDENGDGDDSDDGDDDGSGDDGNRPERPPPHGGNHQRPPPGHHHGPPPSGGPQTSSQPGNPQGPPPQGGPQGPPQPGNPQGPPPQGGPQQRPPQPGKPQGPPPQGGPQGPPQPGNPQGPPPQGGHQQRPPQPRKPQDPAQDATHEQPSYLWFSS.

The signal sequence occupies residues 1-13 (MLVVLLTAALLVL). The disordered stretch occupies residues 15 to 206 (SAHGSDEEVI…EQPSYLWFSS (192 aa)). Over residues 55–71 (ENGDGDDSDDGDDDGSG) the composition is skewed to acidic residues. A run of 6 repeats spans residues 80–97 (PPPH…HHHG), 98–115 (PPPS…NPQG), 116–133 (PPPQ…NPQG), 134–152 (PPPQ…KPQG), 153–170 (PPPQ…NPQG), and 171–189 (PPPQ…KPQD). The 6 X 18 AA approximate tandem repeats stretch occupies residues 80–189 (PPPHGGNHQR…RPPQPRKPQD (110 aa)). Over residues 103-112 (GPQTSSQPGN) the composition is skewed to low complexity. Positions 113 to 174 (PQGPPPQGGP…PGNPQGPPPQ (62 aa)) are enriched in pro residues.

It is found in the secreted. Functionally, may protect teeth by binding to tannins. This Rattus norvegicus (Rat) protein is Acidic proline-rich protein PRP33 (Prpg1).